The sequence spans 369 residues: 2-aminoethylphosphonate--pyruvate transaminase (369 aa).

At K193 the chain carries N6-(pyridoxal phosphate)lysine.

This sequence belongs to the class-V pyridoxal-phosphate-dependent aminotransferase family. PhnW subfamily. As to quaternary structure, homodimer. Requires pyridoxal 5'-phosphate as cofactor.

The enzyme catalyses (2-aminoethyl)phosphonate + pyruvate = phosphonoacetaldehyde + L-alanine. Involved in phosphonate degradation. This is 2-aminoethylphosphonate--pyruvate transaminase from Burkholderia pseudomallei (strain K96243).